Here is a 347-residue protein sequence, read N- to C-terminus: Holliday junction branch migration complex subunit RuvB (347 aa).

Positions 1 to 182 are large ATPase domain (RuvB-L); it reads MSAQNPVLTP…FGIPVRLSFY (182 aa). ATP-binding positions include Leu-21, Arg-22, Gly-63, Lys-66, Thr-67, Thr-68, 129–131, Arg-172, Tyr-182, and Arg-219; that span reads EDF. Thr-67 contributes to the Mg(2+) binding site. Residues 183 to 253 form a small ATPAse domain (RuvB-S) region; it reads TVEELELIVR…IADEALTRLL (71 aa). The segment at 256 to 347 is head domain (RuvB-H); that stretch reads NMGLDQLDTR…QFRLTLEDDD (92 aa). DNA is bound by residues Arg-292, Arg-311, and Arg-316.

Belongs to the RuvB family. As to quaternary structure, homohexamer. Forms an RuvA(8)-RuvB(12)-Holliday junction (HJ) complex. HJ DNA is sandwiched between 2 RuvA tetramers; dsDNA enters through RuvA and exits via RuvB. An RuvB hexamer assembles on each DNA strand where it exits the tetramer. Each RuvB hexamer is contacted by two RuvA subunits (via domain III) on 2 adjacent RuvB subunits; this complex drives branch migration. In the full resolvosome a probable DNA-RuvA(4)-RuvB(12)-RuvC(2) complex forms which resolves the HJ.

It is found in the cytoplasm. The catalysed reaction is ATP + H2O = ADP + phosphate + H(+). The RuvA-RuvB-RuvC complex processes Holliday junction (HJ) DNA during genetic recombination and DNA repair, while the RuvA-RuvB complex plays an important role in the rescue of blocked DNA replication forks via replication fork reversal (RFR). RuvA specifically binds to HJ cruciform DNA, conferring on it an open structure. The RuvB hexamer acts as an ATP-dependent pump, pulling dsDNA into and through the RuvAB complex. RuvB forms 2 homohexamers on either side of HJ DNA bound by 1 or 2 RuvA tetramers; 4 subunits per hexamer contact DNA at a time. Coordinated motions by a converter formed by DNA-disengaged RuvB subunits stimulates ATP hydrolysis and nucleotide exchange. Immobilization of the converter enables RuvB to convert the ATP-contained energy into a lever motion, pulling 2 nucleotides of DNA out of the RuvA tetramer per ATP hydrolyzed, thus driving DNA branch migration. The RuvB motors rotate together with the DNA substrate, which together with the progressing nucleotide cycle form the mechanistic basis for DNA recombination by continuous HJ branch migration. Branch migration allows RuvC to scan DNA until it finds its consensus sequence, where it cleaves and resolves cruciform DNA. In Allorhizobium ampelinum (strain ATCC BAA-846 / DSM 112012 / S4) (Agrobacterium vitis (strain S4)), this protein is Holliday junction branch migration complex subunit RuvB.